Reading from the N-terminus, the 549-residue chain is Glucose-6-phosphate isomerase (549 aa).

Catalysis depends on Glu-355, which acts as the Proton donor. Catalysis depends on residues His-387 and Lys-515.

The protein belongs to the GPI family.

It is found in the cytoplasm. The catalysed reaction is alpha-D-glucose 6-phosphate = beta-D-fructose 6-phosphate. The protein operates within carbohydrate biosynthesis; gluconeogenesis. Its pathway is carbohydrate degradation; glycolysis; D-glyceraldehyde 3-phosphate and glycerone phosphate from D-glucose: step 2/4. Its function is as follows. Catalyzes the reversible isomerization of glucose-6-phosphate to fructose-6-phosphate. This chain is Glucose-6-phosphate isomerase, found in Haemophilus influenzae (strain ATCC 51907 / DSM 11121 / KW20 / Rd).